The chain runs to 325 residues: 4-hydroxy-3-methylbut-2-enyl diphosphate reductase (325 aa).

C25 contributes to the [4Fe-4S] cluster binding site. Positions 54 and 87 each coordinate (2E)-4-hydroxy-3-methylbut-2-enyl diphosphate. Dimethylallyl diphosphate is bound by residues H54 and H87. Positions 54 and 87 each coordinate isopentenyl diphosphate. C109 is a binding site for [4Fe-4S] cluster. H137 contributes to the (2E)-4-hydroxy-3-methylbut-2-enyl diphosphate binding site. Dimethylallyl diphosphate is bound at residue H137. H137 is a binding site for isopentenyl diphosphate. Residue E139 is the Proton donor of the active site. Position 179 (T179) interacts with (2E)-4-hydroxy-3-methylbut-2-enyl diphosphate. C209 is a [4Fe-4S] cluster binding site. S237, S238, N239, and S282 together coordinate (2E)-4-hydroxy-3-methylbut-2-enyl diphosphate. Residues S237, S238, N239, and S282 each coordinate dimethylallyl diphosphate. Isopentenyl diphosphate-binding residues include S237, S238, N239, and S282.

It belongs to the IspH family. Requires [4Fe-4S] cluster as cofactor.

The catalysed reaction is isopentenyl diphosphate + 2 oxidized [2Fe-2S]-[ferredoxin] + H2O = (2E)-4-hydroxy-3-methylbut-2-enyl diphosphate + 2 reduced [2Fe-2S]-[ferredoxin] + 2 H(+). It carries out the reaction dimethylallyl diphosphate + 2 oxidized [2Fe-2S]-[ferredoxin] + H2O = (2E)-4-hydroxy-3-methylbut-2-enyl diphosphate + 2 reduced [2Fe-2S]-[ferredoxin] + 2 H(+). Its pathway is isoprenoid biosynthesis; dimethylallyl diphosphate biosynthesis; dimethylallyl diphosphate from (2E)-4-hydroxy-3-methylbutenyl diphosphate: step 1/1. The protein operates within isoprenoid biosynthesis; isopentenyl diphosphate biosynthesis via DXP pathway; isopentenyl diphosphate from 1-deoxy-D-xylulose 5-phosphate: step 6/6. In terms of biological role, catalyzes the conversion of 1-hydroxy-2-methyl-2-(E)-butenyl 4-diphosphate (HMBPP) into a mixture of isopentenyl diphosphate (IPP) and dimethylallyl diphosphate (DMAPP). Acts in the terminal step of the DOXP/MEP pathway for isoprenoid precursor biosynthesis. This chain is 4-hydroxy-3-methylbut-2-enyl diphosphate reductase, found in Corynebacterium glutamicum (strain ATCC 13032 / DSM 20300 / JCM 1318 / BCRC 11384 / CCUG 27702 / LMG 3730 / NBRC 12168 / NCIMB 10025 / NRRL B-2784 / 534).